Consider the following 213-residue polypeptide: Nucleolar protein 12 (213 aa).

Positions 32–95 form a coiled coil; it reads GFHKRKVERK…RLVTAKTESV (64 aa). A disordered region spans residues 117–213; the sequence is ARLLGLPTPE…LTGKARHSGE (97 aa). Composition is skewed to basic residues over residues 169–181 and 197–213; these read AHSR…KRLR and SKTR…HSGE.

The protein belongs to the RRP17 family. As to quaternary structure, interacts with KIAA1191.

The protein resides in the nucleus. The protein localises to the nucleolus. Its subcellular location is the cytoplasm. Functionally, multifunctional RNA binding protein that plays a role in RNA metabolism and DNA maintenance. Participates in the resolution of DNA stress and the maintenance of genome integrity by localizing to sites of DNA insults. Also plays a role in proper nucleolar organization by limiting nucleolar size and regulating nucleolar number. Mechanistically, regulates the nucleolar levels of fibrillarin and nucleolin, two key players in pre-rRNA processing and ribosome assembly. The protein is Nucleolar protein 12 (NOL12) of Bos taurus (Bovine).